A 278-amino-acid polypeptide reads, in one-letter code: Shikimate dehydrogenase (NADP(+)) (278 aa).

Residues 18 to 20 (SKS) and T65 each bind shikimate. The active-site Proton acceptor is the K69. E81 is a binding site for NADP(+). 2 residues coordinate shikimate: N90 and D106. Residues 130–134 (GAGGA) and 154–159 (NRTFAK) each bind NADP(+). Y223 is a binding site for shikimate. NADP(+) is bound at residue G241.

Belongs to the shikimate dehydrogenase family. As to quaternary structure, homodimer.

It catalyses the reaction shikimate + NADP(+) = 3-dehydroshikimate + NADPH + H(+). It participates in metabolic intermediate biosynthesis; chorismate biosynthesis; chorismate from D-erythrose 4-phosphate and phosphoenolpyruvate: step 4/7. Involved in the biosynthesis of the chorismate, which leads to the biosynthesis of aromatic amino acids. Catalyzes the reversible NADPH linked reduction of 3-dehydroshikimate (DHSA) to yield shikimate (SA). The chain is Shikimate dehydrogenase (NADP(+)) from Vibrio cholerae serotype O1 (strain ATCC 39541 / Classical Ogawa 395 / O395).